The primary structure comprises 609 residues: Protein FRIGIDA (609 aa).

Low complexity predominate over residues 1-18 (MSNYPPTVAAQPTTTANP). Residues 1-31 (MSNYPPTVAAQPTTTANPLLQRHQSEQRRRE) form a disordered region. Coiled-coil stretches lie at residues 60–97 (DELAAFSVAVETFKRQFDDLQKHIESIENAIDSKLESN) and 409–440 (QIKEQIVSLEKDTLQLDKEMEEKARSLSLMEE). Disordered regions lie at residues 454 to 488 (RPRLSPMEMPPVTSSSYSPIYRDRSFPSQRDDDQD) and 587 to 609 (SEERYLGLSNQRSPRSNSSLDPK). The segment covering 474-484 (YRDRSFPSQRD) has biased composition (basic and acidic residues). Residues 594 to 609 (LSNQRSPRSNSSLDPK) are compositionally biased toward polar residues.

This sequence belongs to the Frigida family. In terms of assembly, homodimer. Component of the transcription activator complex FRI-C composed of FRI, FRL1, SUF4, FLX and FES1. Interacts (via N-terminus) with FRL1 and (via C-terminus) with FLX (via N-terminus), SUF4 (via C-terminus) and FES1 (via C-terminus). Interacts with ASHH2 and RIN1, a component of the SWR1 chromatin-remodeling complex. Interacts with CBP20, FIP1 and FIP2. Expressed in ovules, but not in stamens.

Its subcellular location is the nucleus speckle. Its function is as follows. Required for the regulation of flowering time in the late-flowering phenotype. Involved in the enrichment of a WDR5A-containing COMPASS-like complex at the 'FLOWERING LOCUS C' that trimethylates histone H3 'Lys-4', leading to FLC up-regulation and RNA levels increase. Variants with an early-flowering phenotype (Including cv. Columbia, cv. Landsberg Erecta and cv. Wassilewskija) show loss-of-function mutations of FRI. Able to delay flowering independently of FRL1 activity. Dispensable for the reactivation of FLC in early embryogenesis, but required to maintain high levels of FLC expression in later embryonic and vegetative development. Suppresses the repression of FLC by the autonomous pathway, but has no effect on the expression of the genes involved in this pathway. In Arabidopsis thaliana (Mouse-ear cress), this protein is Protein FRIGIDA.